An 827-amino-acid polypeptide reads, in one-letter code: ADP-ribosylation factor GTPase-activating protein AGD3 (827 aa).

A BAR domain is found at 1-225 (MHFTKLDDSP…INQVLTYAQQ (225 aa)). 2 coiled-coil regions span residues 116 to 139 (HEVK…REKF) and 223 to 253 (AQQS…RESR). The segment at 246–269 (RQVDRESRWGSNGSNGSPNGDGIQ) is disordered. Residues 255-267 (GSNGSNGSPNGDG) are compositionally biased toward low complexity. Residues 292–430 (QTIRQGYLSK…WIEKITGVIA (139 aa)) enclose the PH domain. The disordered stretch occupies residues 439-467 (EQRLPGSPMGSGHHRSASESSSYESSEYD). At Ser445 the chain carries Phosphoserine. The Arf-GAP domain maps to 501 to 643 (EKPIDALRKV…LFVRRSRDSD (143 aa)). Residues 516 to 539 (CADCGAPEPDWASLNLGVLVCIEC) form a C4-type zinc finger. 3 ANK repeats span residues 728–757 (GGSS…NVNA), 761–790 (SGQT…DPEA), and 794–825 (EGKT…YNHR).

In terms of assembly, homodimer. Interacts with DRP1A. Interacts with VAB. As to expression, broadly expressed. Detected in developing veins of the leaf and root. Detected in roots, hypocotyls, cotyledons, leaves, siliques and shoot apical meristems.

It is found in the golgi apparatus. It localises to the trans-Golgi network. ARF GAP activity strongly enhanced by phosphatidylinositol 4-monophosphate (PIP) and moderately enhanced by phosphatidylinositol 4,5-bisphosphate (PIP2). Its function is as follows. GTPase-activating protein (GAP) for ADP ribosylation factor (ARF). Involved in the spatial control of provascular differentiation. Required for the formation of the normal pattern of continuous secondary veins. Involved in auxin signaling but not in polar auxin transport or in auxin responses. Required for PIN1 internalization in roots. The sequence is that of ADP-ribosylation factor GTPase-activating protein AGD3 (AGD3) from Arabidopsis thaliana (Mouse-ear cress).